We begin with the raw amino-acid sequence, 206 residues long: Dephospho-CoA kinase (206 aa).

Residues 6-206 (IIGLTGGIAS…KWKWKDWSKK (201 aa)) enclose the DPCK domain. 14–19 (ASGKST) contributes to the ATP binding site.

It belongs to the CoaE family.

The protein localises to the cytoplasm. It carries out the reaction 3'-dephospho-CoA + ATP = ADP + CoA + H(+). Its pathway is cofactor biosynthesis; coenzyme A biosynthesis; CoA from (R)-pantothenate: step 5/5. Functionally, catalyzes the phosphorylation of the 3'-hydroxyl group of dephosphocoenzyme A to form coenzyme A. The protein is Dephospho-CoA kinase of Carboxydothermus hydrogenoformans (strain ATCC BAA-161 / DSM 6008 / Z-2901).